Consider the following 435-residue polypeptide: Probable protein arginine N-methyltransferase 6 (435 aa).

The disordered stretch occupies residues 1–48; it reads MQSGGDFSNGFHGDHHRELELEDKQGPSLSSFGRAKKRSHAGARDPRG. Residues 12 to 25 show a composition bias toward basic and acidic residues; sequence HGDHHRELELEDKQ. The SAM-dependent MTase PRMT-type domain occupies 80-418; sequence DVAYFHSYAH…KENKRFMNIH (339 aa). S-adenosyl-L-methionine is bound by residues His-93, Arg-102, Gly-126, Asp-148, and Glu-177. Residues Glu-191 and Glu-200 contribute to the active site. Residues 333–377 form a disordered region; sequence PAKNTSETSIASGSSSISPSGEVNQKKRTNPSDALVLSTSPESPP. Low complexity predominate over residues 337 to 354; sequence TSETSIASGSSSISPSGE.

The protein belongs to the class I-like SAM-binding methyltransferase superfamily. Protein arginine N-methyltransferase family. PRMT6 subfamily.

In terms of biological role, arginine methyltransferase that can both catalyze the formation of omega-N monomethylarginine (MMA) and asymmetrical dimethylarginine (aDMA). This is Probable protein arginine N-methyltransferase 6 (PRMT6) from Arabidopsis thaliana (Mouse-ear cress).